Here is a 237-residue protein sequence, read N- to C-terminus: Ribonuclease PH (237 aa).

Residues R86 and 124 to 126 (GTR) contribute to the phosphate site.

Belongs to the RNase PH family. In terms of assembly, homohexameric ring arranged as a trimer of dimers.

It catalyses the reaction tRNA(n+1) + phosphate = tRNA(n) + a ribonucleoside 5'-diphosphate. Its function is as follows. Phosphorolytic 3'-5' exoribonuclease that plays an important role in tRNA 3'-end maturation. Removes nucleotide residues following the 3'-CCA terminus of tRNAs; can also add nucleotides to the ends of RNA molecules by using nucleoside diphosphates as substrates, but this may not be physiologically important. Probably plays a role in initiation of 16S rRNA degradation (leading to ribosome degradation) during starvation. The sequence is that of Ribonuclease PH from Shewanella pealeana (strain ATCC 700345 / ANG-SQ1).